The following is a 1412-amino-acid chain: Probable phosphatidylinositol 4-kinase STT4 homolog (1412 aa).

The 178-residue stretch at 878 to 1055 folds into the PIK helical domain; the sequence is SMETNGFYRF…GTFVRCIEEI (178 aa). The pleckstrin homology (PH) domain conferring phosphoinositide binding specificity stretch occupies residues 1056-1163; that stretch reads MKEMPDGSRD…ISIKQLIFKS (108 aa). Positions 1127–1396 constitute a PI3K/PI4K catalytic domain; that stretch reads NGSARALQSH…LIAESSQKFR (270 aa). Residues 1133–1139 are G-loop; the sequence is LQSHSKV. The catalytic loop stretch occupies residues 1266 to 1274; sequence NIKDRHNGN. The activation loop stretch occupies residues 1285-1308; that stretch reads HIDFGYMLEMSPGNLNIEAPLKLT.

This sequence belongs to the PI3/PI4-kinase family. Type III PI4K subfamily.

Its subcellular location is the cytoplasm. It catalyses the reaction a 1,2-diacyl-sn-glycero-3-phospho-(1D-myo-inositol) + ATP = a 1,2-diacyl-sn-glycero-3-phospho-(1D-myo-inositol 4-phosphate) + ADP + H(+). Functionally, acts on phosphatidylinositol (PI) in the first committed step in the production of the second messenger inositol 1,4,5,-trisphosphate. The chain is Probable phosphatidylinositol 4-kinase STT4 homolog (STT4) from Encephalitozoon cuniculi (strain GB-M1) (Microsporidian parasite).